Reading from the N-terminus, the 422-residue chain is Metallocarboxypeptidase A-like protein TRV_02598 (422 aa).

The N-terminal stretch at 1–16 (MQSLLLLATLLGSALG) is a signal peptide. A propeptide spans 17–119 (GAIPSQSANY…ELLTLDGGAN (103 aa)) (activation peptide). One can recognise a Peptidase M14 domain in the interval 125–421 (SYHKYEDHLK…AGVKAMFSKL (297 aa)). Zn(2+) contacts are provided by histidine 185 and glutamate 188. Substrate-binding positions include 185–188 (HARE), arginine 240, and 256–257 (NR). A disulfide bridge connects residues cysteine 250 and cysteine 273. Histidine 311 is a Zn(2+) binding site. 312–313 (SY) contributes to the substrate binding site. The active-site Proton donor/acceptor is glutamate 387.

This sequence belongs to the peptidase M14 family. Requires Zn(2+) as cofactor.

It is found in the secreted. Its function is as follows. Extracellular metalloprotease that contributes to pathogenicity. The protein is Metallocarboxypeptidase A-like protein TRV_02598 of Trichophyton verrucosum (strain HKI 0517).